The following is a 158-amino-acid chain: SsrA-binding protein (158 aa).

It belongs to the SmpB family.

The protein localises to the cytoplasm. Its function is as follows. Required for rescue of stalled ribosomes mediated by trans-translation. Binds to transfer-messenger RNA (tmRNA), required for stable association of tmRNA with ribosomes. tmRNA and SmpB together mimic tRNA shape, replacing the anticodon stem-loop with SmpB. tmRNA is encoded by the ssrA gene; the 2 termini fold to resemble tRNA(Ala) and it encodes a 'tag peptide', a short internal open reading frame. During trans-translation Ala-aminoacylated tmRNA acts like a tRNA, entering the A-site of stalled ribosomes, displacing the stalled mRNA. The ribosome then switches to translate the ORF on the tmRNA; the nascent peptide is terminated with the 'tag peptide' encoded by the tmRNA and targeted for degradation. The ribosome is freed to recommence translation, which seems to be the essential function of trans-translation. This Pseudoalteromonas atlantica (strain T6c / ATCC BAA-1087) protein is SsrA-binding protein.